The sequence spans 667 residues: Protein angel homolog 1 (667 aa).

A phosphoserine mark is found at Ser77 and Ser105.

This sequence belongs to the CCR4/nocturin family.

This is Protein angel homolog 1 from Mus musculus (Mouse).